Consider the following 171-residue polypeptide: Galectin-related protein A (171 aa).

Positions 38-170 (PFCGHIKGGL…INGDLQLTKL (133 aa)) constitute a Galectin domain.

Does not bind lactose, and may not bind carbohydrates. The sequence is that of Galectin-related protein A (lgalsl-a) from Xenopus laevis (African clawed frog).